The following is an 872-amino-acid chain: Protein translocase subunit SecA (872 aa).

ATP contacts are provided by residues Gln87, 105 to 109, and Asp510; that span reads GEGKT. Residues Cys847, Cys849, Cys858, and Cys859 each coordinate Zn(2+).

Belongs to the SecA family. Monomer and homodimer. Part of the essential Sec protein translocation apparatus which comprises SecA, SecYEG and auxiliary proteins SecDF-YajC and YidC. Zn(2+) serves as cofactor.

The protein resides in the cell inner membrane. Its subcellular location is the cytoplasm. The enzyme catalyses ATP + H2O + cellular proteinSide 1 = ADP + phosphate + cellular proteinSide 2.. Part of the Sec protein translocase complex. Interacts with the SecYEG preprotein conducting channel. Has a central role in coupling the hydrolysis of ATP to the transfer of proteins into and across the cell membrane, serving as an ATP-driven molecular motor driving the stepwise translocation of polypeptide chains across the membrane. This is Protein translocase subunit SecA from Aliarcobacter butzleri (strain RM4018) (Arcobacter butzleri).